A 106-amino-acid polypeptide reads, in one-letter code: Small ribosomal subunit protein uS10 (106 aa).

The protein belongs to the universal ribosomal protein uS10 family. In terms of assembly, part of the 30S ribosomal subunit.

Functionally, involved in the binding of tRNA to the ribosomes. The sequence is that of Small ribosomal subunit protein uS10 from Pyrobaculum aerophilum (strain ATCC 51768 / DSM 7523 / JCM 9630 / CIP 104966 / NBRC 100827 / IM2).